The sequence spans 227 residues: GRF-interacting factor 1 (227 aa).

Low complexity predominate over residues 124 to 139 (ALSPLQQQQQQQAAAA). Disordered stretches follow at residues 124 to 160 (ALSP…LHGE) and 188 to 227 (GGGG…EEGS). Positions 217–227 (EYLKGTEEEGS) are enriched in basic and acidic residues.

This sequence belongs to the SS18 family. In terms of assembly, interacts with GRF4. Highly expressed in internodes, nodes, developing spikelets and developing anthers. Expressed at low levels in roots and mature glumes.

It localises to the nucleus. It is found in the cytoplasm. Functionally, transcription coactivator that plays a role in the regulation of meristematic function in leaves, stems and inflorescences. May regulate leaf size, length of stem internodes, and seed size by promoting cell expansion. Transcription coactivator that plays a role in the regulation of grain size. Component of a network formed by the microRNA396 (miRNA396), the GRFs and their interacting factors (GIFs) acting in the regulation of meristem function, at least partially through the control of cell proliferation. Component of the miRNA396c-GRF4-GIF1 regulatory module that plays an important role in grain size determination. The chain is GRF-interacting factor 1 from Oryza sativa subsp. japonica (Rice).